Consider the following 209-residue polypeptide: GTP cyclohydrolase-2 (209 aa).

49-53 serves as a coordination point for GTP; sequence RIHSE. Cysteine 54, cysteine 65, and cysteine 67 together coordinate Zn(2+). GTP-binding positions include glutamine 70, 92–94, and threonine 114; that span reads EGR. Catalysis depends on aspartate 126, which acts as the Proton acceptor. Catalysis depends on arginine 128, which acts as the Nucleophile. 2 residues coordinate GTP: threonine 149 and lysine 154.

The protein belongs to the GTP cyclohydrolase II family. Zn(2+) serves as cofactor.

The enzyme catalyses GTP + 4 H2O = 2,5-diamino-6-hydroxy-4-(5-phosphoribosylamino)-pyrimidine + formate + 2 phosphate + 3 H(+). Its pathway is cofactor biosynthesis; riboflavin biosynthesis; 5-amino-6-(D-ribitylamino)uracil from GTP: step 1/4. Its function is as follows. Catalyzes the conversion of GTP to 2,5-diamino-6-ribosylamino-4(3H)-pyrimidinone 5'-phosphate (DARP), formate and pyrophosphate. The chain is GTP cyclohydrolase-2 from Shewanella pealeana (strain ATCC 700345 / ANG-SQ1).